Here is a 447-residue protein sequence, read N- to C-terminus: Trigger factor (447 aa).

The 86-residue stretch at 164 to 249 (GNQVTFDFEG…VKLVEKSKLP (86 aa)) folds into the PPIase FKBP-type domain.

Belongs to the FKBP-type PPIase family. Tig subfamily.

The protein localises to the cytoplasm. It carries out the reaction [protein]-peptidylproline (omega=180) = [protein]-peptidylproline (omega=0). In terms of biological role, involved in protein export. Acts as a chaperone by maintaining the newly synthesized protein in an open conformation. Functions as a peptidyl-prolyl cis-trans isomerase. This chain is Trigger factor, found in Psychrobacter arcticus (strain DSM 17307 / VKM B-2377 / 273-4).